Reading from the N-terminus, the 135-residue chain is Large ribosomal subunit protein uL16c (135 aa).

This sequence belongs to the universal ribosomal protein uL16 family. Part of the 50S ribosomal subunit.

Its subcellular location is the plastid. The protein resides in the chloroplast. In Platanus occidentalis (Sycamore), this protein is Large ribosomal subunit protein uL16c.